The sequence spans 505 residues: Probable cytochrome P450 28a5 (505 aa).

Cysteine 450 is a heme binding site.

It belongs to the cytochrome P450 family. Heme is required as a cofactor.

It is found in the endoplasmic reticulum membrane. It localises to the microsome membrane. Functionally, may be involved in the metabolism of insect hormones and in the breakdown of synthetic insecticides. The sequence is that of Probable cytochrome P450 28a5 (Cyp28a5) from Drosophila melanogaster (Fruit fly).